The primary structure comprises 685 residues: RING finger protein 145 (685 aa).

A run of 13 helical transmembrane segments spans residues 53–73, 77–97, 123–143, 151–171, 174–194, 225–245, 275–295, 316–336, 340–360, 384–404, 410–430, 460–480, and 482–502; these read YIAL…LTLP, LVQL…HQLS, FTTA…VMQT, AHLL…IVFI, FAMI…LLVP, LVLP…QIYT, YSLL…LTLC, TEGI…LQVI, FLLS…MLEI, SLCL…CQFF, LLII…TLLI, LLEF…TLFG, and WTVM…WLRA. An RING-type; atypical zinc finger spans residues 537-575; it reads CSICFQDMKSAVITPCSHFFHAACLKKWLYVQETCPLCH. Residues 582–685 are disordered; it reads LQPTSSPGTP…VSTSDVNCAS (104 aa). Positions 583–602 are enriched in low complexity; sequence QPTSSPGTPTQGTPAANQNP. Residues 620-631 show a composition bias toward basic and acidic residues; that stretch reads EGIRAEEMKTSA.

The protein localises to the membrane. The protein is RING finger protein 145 (rnf145) of Danio rerio (Zebrafish).